The chain runs to 269 residues: Tryptophan synthase alpha chain (269 aa).

Catalysis depends on proton acceptor residues Glu49 and Asp60.

The protein belongs to the TrpA family. Tetramer of two alpha and two beta chains.

The catalysed reaction is (1S,2R)-1-C-(indol-3-yl)glycerol 3-phosphate + L-serine = D-glyceraldehyde 3-phosphate + L-tryptophan + H2O. The protein operates within amino-acid biosynthesis; L-tryptophan biosynthesis; L-tryptophan from chorismate: step 5/5. Its function is as follows. The alpha subunit is responsible for the aldol cleavage of indoleglycerol phosphate to indole and glyceraldehyde 3-phosphate. This Pseudomonas putida (strain ATCC 700007 / DSM 6899 / JCM 31910 / BCRC 17059 / LMG 24140 / F1) protein is Tryptophan synthase alpha chain.